Here is a 214-residue protein sequence, read N- to C-terminus: Large ribosomal subunit protein bL25 (214 aa).

Positions 187–214 are disordered; it reads AEVAPSIEETVEPEVIKKGKKAEEEEEK. Basic and acidic residues predominate over residues 200–214; it reads EVIKKGKKAEEEEEK.

Belongs to the bacterial ribosomal protein bL25 family. CTC subfamily. As to quaternary structure, part of the 50S ribosomal subunit; part of the 5S rRNA/L5/L18/L25 subcomplex. Contacts the 5S rRNA. Binds to the 5S rRNA independently of L5 and L18.

Its function is as follows. This is one of the proteins that binds to the 5S RNA in the ribosome where it forms part of the central protuberance. The polypeptide is Large ribosomal subunit protein bL25 (Thermodesulfovibrio yellowstonii (strain ATCC 51303 / DSM 11347 / YP87)).